A 365-amino-acid chain; its full sequence is Peridinin-chlorophyll a-binding protein, chloroplastic (365 aa).

The transit peptide at 1–52 directs the protein to the chloroplast; it reads MVRGARKAIAVGVAVAVACGLQKHLNFVPGPRHAAPVAAAAASMMMAPAAFA. 2 repeat units span residues 53-215 and 216-365.

As to quaternary structure, monomer.

The protein resides in the plastid. The protein localises to the chloroplast. In terms of biological role, water-soluble antenna for capture of solar energy in the blue-green range. Peridinin is an asymmetric carotenoid. The polypeptide is Peridinin-chlorophyll a-binding protein, chloroplastic (Symbiodinium sp. (Dinoflagellate)).